Reading from the N-terminus, the 245-residue chain is Orotidine 5'-phosphate decarboxylase (245 aa).

Substrate-binding positions include aspartate 22, lysine 44, 71-80 (DLKFHDIPNT), threonine 131, arginine 192, glutamine 201, glycine 221, and arginine 222. The active-site Proton donor is lysine 73.

The protein belongs to the OMP decarboxylase family. Type 1 subfamily. As to quaternary structure, homodimer.

The enzyme catalyses orotidine 5'-phosphate + H(+) = UMP + CO2. The protein operates within pyrimidine metabolism; UMP biosynthesis via de novo pathway; UMP from orotate: step 2/2. Functionally, catalyzes the decarboxylation of orotidine 5'-monophosphate (OMP) to uridine 5'-monophosphate (UMP). The sequence is that of Orotidine 5'-phosphate decarboxylase from Escherichia coli O6:K15:H31 (strain 536 / UPEC).